The primary structure comprises 249 residues: Uridylate kinase (249 aa).

An ATP-binding site is contributed by 23–26 (KISG). The involved in allosteric activation by GTP stretch occupies residues 31 to 36 (GDQGFG). G65 is a binding site for UMP. G66 and R70 together coordinate ATP. Residues D85 and 146–153 (TGNPYFTT) contribute to the UMP site. ATP is bound by residues T173, Y179, and D182.

This sequence belongs to the UMP kinase family. As to quaternary structure, homohexamer.

It is found in the cytoplasm. The catalysed reaction is UMP + ATP = UDP + ADP. Its pathway is pyrimidine metabolism; CTP biosynthesis via de novo pathway; UDP from UMP (UMPK route): step 1/1. With respect to regulation, allosterically activated by GTP. Inhibited by UTP. Catalyzes the reversible phosphorylation of UMP to UDP. In Jannaschia sp. (strain CCS1), this protein is Uridylate kinase.